Here is an 860-residue protein sequence, read N- to C-terminus: MQEQYRPEEIEADVQLHWQEKQTFKVTEQPGKEKYYCLSMLPYPSGRLHMGHVRNYTIGDVISRYQRMLGKNVLQPIGWDAFGLPAEGAAVKNNTAPAPWTYANIDYMKNQLKLLGFGYDWDREVATCKPDYYRWEQWFFTKLYEKGLVYKKTSAVNWCPNDQTVLANEQVIDGCCWRCDTKVERKEIPQWFIKITAYADQLLNDLDTLESWPEQVKTMQRNWIGRSEGVEITFDVADSAEKLTVYTTRPDTFMGVTYVAVAAGHPLAAQAAAANPALADFIAECRNTKVAEADMATMEKKGMATGLYAIHPLNGEKVAIWVANFVLMEYGTGAVMAVPGHDQRDWEFATKYDLSIKPVILNADGSEPDLSAEAMTEKGNLFNSGEFDGLDFDAAFNAIADKLVEKGIGERKVNYRLRDWGVSRQRYWGAPIPMVTLEDGTVIPTPEDQLPVILPEDVVMDGITSPLKSNPEWAKTTVNGQPALRETDTFDTFMESSWYYARYTCPQYDQGMLDPAAANYWLPVDQYVGGIEHAIMHLMYFRFFHKLMRDAGLVTSDEPAKRLLCQGMVLADAFYYLGNNGERVWVSPIDVDVERDEKGRIVKAVDNEGRDVIYAGMSKMSKSKNNGIDPQVMVEKYGADTVRLFMMFASPAEMTLEWQESGVEGANRFLKRVWRQAFEHTEKGATTALDVATLTEDQKSLRRDLHKTIAKVTDDIGRRQTFNTAIAAIMELMNKLAKAPQDSDQDRALTQETLLAVVRMLYPFTPHVCFTLWQALQGEGDIDTAPWPVADESAMVEDSKLVVVQVNGKVRGKITVAADASEEQVRERAAQEPLVAKYLDGVTVRKVIYVPGKLLNLVVG.

Residues 42 to 52 (PYPSGRLHMGH) carry the 'HIGH' region motif. A 'KMSKS' region motif is present at residues 619–623 (KMSKS). Lysine 622 contacts ATP.

Belongs to the class-I aminoacyl-tRNA synthetase family.

It is found in the cytoplasm. It carries out the reaction tRNA(Leu) + L-leucine + ATP = L-leucyl-tRNA(Leu) + AMP + diphosphate. This chain is Leucine--tRNA ligase, found in Pectobacterium carotovorum subsp. carotovorum (strain PC1).